We begin with the raw amino-acid sequence, 299 residues long: Probable alpha-L-glutamate ligase (299 aa).

Residues 112-294 (LQLLTEQGIA…IALQMIVHIE (183 aa)) enclose the ATP-grasp domain. Residues Lys148, 185 to 186 (DF), Asp194, and 218 to 220 (RAN) contribute to the ATP site. Residues Asp255, Glu267, and Asn269 each coordinate Mg(2+). The Mn(2+) site is built by Asp255, Glu267, and Asn269.

Belongs to the RimK family. Mg(2+) serves as cofactor. The cofactor is Mn(2+).

This is Probable alpha-L-glutamate ligase from Histophilus somni (strain 2336) (Haemophilus somnus).